A 594-amino-acid polypeptide reads, in one-letter code: Zinc finger protein 37 (594 aa).

The segment at 1–253 is disordered; that stretch reads MATSEPAESD…KPEKAPGSGK (253 aa). Phosphothreonine is present on T3. Residues 3-74 enclose the KRAB domain; it reads TSEPAESDAV…GKKASPSSLK (72 aa). S9 carries the phosphoserine modification. Residues 10 to 33 show a composition bias toward basic and acidic residues; sequence DAVRAKEWEQLEPVQRDVYKDTKL. Over residues 34–46 the composition is skewed to polar residues; sequence ENCSNPASMGNQD. Residues 89 to 111 show a composition bias toward basic and acidic residues; it reads QQDDEHREEKQKSQSKLTKEVTL. Residues 145–158 show a composition bias toward polar residues; the sequence is KSSSRGKNSNQNSD. Basic and acidic residues-rich tracts occupy residues 159–172 and 181–234; these read SLKKKPDTANDHRK and VNKD…TGEK. 12 C2H2-type zinc fingers span residues 255–277, 283–305, 311–324, 339–361, 367–389, 395–417, 423–445, 451–473, 479–501, 507–529, 535–557, and 563–585; these read YECNHCGKVLSHKQGLLDHQRTH, YECNECGIAFSQKSHLVVHQRTH, YECEQCGKAHGHKH, YKCNECGKTFRHSSNLMQHLRSH, YECKECGKSFRYNSSLTEHVRTH, YECNECGKAFKYGSSLTKHMRIH, FECNECGKTFSKKSHLVIHQRTH, YKCDECGKAFGHSSSLTYHMRTH, FECNQCGKAFKQIEGLTQHQRVH, YECVECGKAFSQKSHLIVHQRTH, FECYECGKAFNAKSQLVIHQRSH, and YECIECGKAFKQNASLTKHMKIH.

Belongs to the krueppel C2H2-type zinc-finger protein family. In terms of tissue distribution, expressed in testis and brain.

It is found in the nucleus. In terms of biological role, may have a role in regulating spermiogenesis. The chain is Zinc finger protein 37 (Zfp37) from Mus musculus (Mouse).